The sequence spans 443 residues: Chromosome partition protein MukF (443 aa).

Residues 209-237 are leucine-zipper; sequence LDETSINLRELQDTLNAAGDKLQSQLLRI.

It belongs to the MukF family. In terms of assembly, interacts, and probably forms a ternary complex, with MukE and MukB via its C-terminal region. The complex formation is stimulated by calcium or magnesium. It is required for an interaction between MukE and MukB.

The protein localises to the cytoplasm. The protein resides in the nucleoid. In terms of biological role, involved in chromosome condensation, segregation and cell cycle progression. May participate in facilitating chromosome segregation by condensation DNA from both sides of a centrally located replisome during cell division. Not required for mini-F plasmid partitioning. Probably acts via its interaction with MukB and MukE. Overexpression results in anucleate cells. It has a calcium binding activity. The polypeptide is Chromosome partition protein MukF (Haemophilus ducreyi (strain 35000HP / ATCC 700724)).